The sequence spans 455 residues: Bifunctional protein GlmU (455 aa).

The tract at residues 1–228 (MTQPLHVIIL…AQEAEGANDP (228 aa)) is pyrophosphorylase. UDP-N-acetyl-alpha-D-glucosamine-binding positions include 10–13 (LAAG), lysine 24, glutamine 76, 81–82 (GT), 103–105 (YGD), glycine 138, glutamate 153, asparagine 168, and asparagine 226. Residue aspartate 105 coordinates Mg(2+). Mg(2+) is bound at residue asparagine 226. The tract at residues 229–249 (WQLSQLERAWQRRAVRALCAQ) is linker. The interval 250–455 (GARVRDPARL…DGWKRPLKKS (206 aa)) is N-acetyltransferase. The UDP-N-acetyl-alpha-D-glucosamine site is built by arginine 332 and lysine 350. The Proton acceptor role is filled by histidine 362. Tyrosine 365 and asparagine 376 together coordinate UDP-N-acetyl-alpha-D-glucosamine. Acetyl-CoA-binding positions include alanine 379, 385–386 (NY), serine 404, alanine 422, and arginine 439.

It in the N-terminal section; belongs to the N-acetylglucosamine-1-phosphate uridyltransferase family. In the C-terminal section; belongs to the transferase hexapeptide repeat family. Homotrimer. The cofactor is Mg(2+).

The protein localises to the cytoplasm. The catalysed reaction is alpha-D-glucosamine 1-phosphate + acetyl-CoA = N-acetyl-alpha-D-glucosamine 1-phosphate + CoA + H(+). It catalyses the reaction N-acetyl-alpha-D-glucosamine 1-phosphate + UTP + H(+) = UDP-N-acetyl-alpha-D-glucosamine + diphosphate. It participates in nucleotide-sugar biosynthesis; UDP-N-acetyl-alpha-D-glucosamine biosynthesis; N-acetyl-alpha-D-glucosamine 1-phosphate from alpha-D-glucosamine 6-phosphate (route II): step 2/2. It functions in the pathway nucleotide-sugar biosynthesis; UDP-N-acetyl-alpha-D-glucosamine biosynthesis; UDP-N-acetyl-alpha-D-glucosamine from N-acetyl-alpha-D-glucosamine 1-phosphate: step 1/1. The protein operates within bacterial outer membrane biogenesis; LPS lipid A biosynthesis. Functionally, catalyzes the last two sequential reactions in the de novo biosynthetic pathway for UDP-N-acetylglucosamine (UDP-GlcNAc). The C-terminal domain catalyzes the transfer of acetyl group from acetyl coenzyme A to glucosamine-1-phosphate (GlcN-1-P) to produce N-acetylglucosamine-1-phosphate (GlcNAc-1-P), which is converted into UDP-GlcNAc by the transfer of uridine 5-monophosphate (from uridine 5-triphosphate), a reaction catalyzed by the N-terminal domain. This Stenotrophomonas maltophilia (strain R551-3) protein is Bifunctional protein GlmU.